Consider the following 258-residue polypeptide: Phosphonates import ATP-binding protein PhnC 3 (258 aa).

One can recognise an ABC transporter domain in the interval 2 to 246 (IEFKNVSLVY…TFEEIYGRKI (245 aa)). Position 35–42 (35–42 (GLSGAGKS)) interacts with ATP.

This sequence belongs to the ABC transporter superfamily. Phosphonates importer (TC 3.A.1.9.1) family. In terms of assembly, the complex is composed of two ATP-binding proteins (PhnC), two transmembrane proteins (PhnE) and a solute-binding protein (PhnD).

It localises to the cell membrane. It catalyses the reaction phosphonate(out) + ATP + H2O = phosphonate(in) + ADP + phosphate + H(+). Part of the ABC transporter complex PhnCDE involved in phosphonates import. Responsible for energy coupling to the transport system. The chain is Phosphonates import ATP-binding protein PhnC 3 from Halalkalibacterium halodurans (strain ATCC BAA-125 / DSM 18197 / FERM 7344 / JCM 9153 / C-125) (Bacillus halodurans).